We begin with the raw amino-acid sequence, 201 residues long: MSTETRVNERIRVPEVRLIGPGGEQVGIVRIEDALRVAADADLDLVEVAPNARPPVCKIMDYGKYKYEAAQKARESRRNQQQTVVKEQKLRPKIDDHDYETKKGHVVRFLEAGSKVKVTIMFRGREQSRPELGYRLLQRLGADVADYGFIETSAKQDGRNMTMVLAPHRGAKTRARARHPGEPAGGPPPKPTAGDSKAAPN.

A disordered region spans residues 167–201; the sequence is PHRGAKTRARARHPGEPAGGPPPKPTAGDSKAAPN. Basic residues predominate over residues 169 to 178; the sequence is RGAKTRARAR.

It belongs to the IF-3 family. As to quaternary structure, monomer.

The protein resides in the cytoplasm. Its function is as follows. IF-3 binds to the 30S ribosomal subunit and shifts the equilibrium between 70S ribosomes and their 50S and 30S subunits in favor of the free subunits, thus enhancing the availability of 30S subunits on which protein synthesis initiation begins. This is Translation initiation factor IF-3 from Mycobacterium bovis (strain ATCC BAA-935 / AF2122/97).